The primary structure comprises 326 residues: Prenyl transferase nodC (326 aa).

Residues 8–28 traverse the membrane as a helical segment; sequence LAAVLFSALFSLGVILVHLPW. H95 provides a ligand contact to isopentenyl diphosphate. D102 and D106 together coordinate Mg(2+). R111 is a dimethylallyl diphosphate binding site. An N-linked (GlcNAc...) asparagine glycan is attached at N139. K195 lines the dimethylallyl diphosphate pocket. N210 is a glycosylation site (N-linked (GlcNAc...) asparagine).

The protein belongs to the FPP/GGPP synthase family.

It is found in the membrane. Its pathway is secondary metabolite biosynthesis. Its function is as follows. Cytochrome P450 monooxygenase; part of the gene cluster that mediates the biosynthesis of the indole diterpenes nodulisporic acids (NA). Nodulisporic acid A (NAA) and its chemically modified derivatives are of particular significance because of their highly potent insecticidal activity against blood-feeding arthropods and lack of observable adverse effects on mammals, in particular the tremogenicity associated with the paspaline-derived IDTs is not observed. The geranylgeranyl diphosphate (GGPP) synthase ggs1, localized outside of the cluster, is proposed to catalyze the first step in nodulisporic acid biosynthesis via conversion of farnesyl pyrophosphate and isopentyl pyrophosphate into geranylgeranyl pyrophosphate (GGPP). Condensation of indole-3-glycerol phosphate with GGPP by the prenyl transferase nodC then forms 3-geranylgeranylindole (3-GGI). Epoxidation by the FAD-dependent monooxygenase nodM leads to a single-epoxidized-GGI that is substrate of the terpene cyclase nodB for cyclization to yield emindole SB. The terminal methyl carbon, C28, of emindole SB is then oxidized by the cytochrome P450 monooxygenase nodW to produce nodulisporic acid F (NAF), the pentacyclic core of NAA. NAF is converted to nodulisporic acid E (NAE) via prenylation. This step is probably performed by one of the indole diterpene prenyltransferases nodD1 or nodD2. Several oxidation steps performed by the FAD-linked oxidoreductase nodO and one of the cytochrome P450 monooxygenase nodR, nodX or nodZ further convert NAE to nodulisporic acid D (NAD). NAD is substrate of cytochrome P450 monooxygenase nodJ to produce the precursor of nodulisporic acid C (NAC), converted to NAC by one of the indole diterpene prenyltransferases nodD1 or nodD2. The FAD-dependent monooxygenase nodY2 then oxidizes NAC to nodulisporic acid B (NAB). Finally NAB is converted to NAA by one of the cytochrome P450 monooxygenases nodR, nodX or nodZ. The protein is Prenyl transferase nodC of Hypoxylon pulicicidum.